Reading from the N-terminus, the 107-residue chain is MRVFQIVYILIISNLIYATSGGGTSSHHHKNDNNIADNTNNNNNNNNNNNNNNITNATTTRTVTTSTKTKTHTGGGVAAMGGILGQNGWFYGDAGLMAAIFGAMLLL.

The first 18 residues, 1-18 (MRVFQIVYILIISNLIYA), serve as a signal peptide directing secretion. The disordered stretch occupies residues 26 to 56 (SHHHKNDNNIADNTNNNNNNNNNNNNNNITN). Over residues 33–56 (NNIADNTNNNNNNNNNNNNNNITN) the composition is skewed to low complexity. Residues asparagine 53 and asparagine 56 are each glycosylated (N-linked (GlcNAc...) asparagine). The GPI-anchor amidated glycine moiety is linked to residue glycine 76. Residues 77–107 (VAAMGGILGQNGWFYGDAGLMAAIFGAMLLL) constitute a propeptide, removed in mature form.

Its subcellular location is the cell membrane. Functionally, cell surface GPI-anchored protein required for virulence. Mediates hyphal ramification which is important for the interaction with host cells. This Candida albicans (strain SC5314 / ATCC MYA-2876) (Yeast) protein is Virulence factor PGA16 (PGA16).